Consider the following 326-residue polypeptide: Iron-sulfur cluster assembly SufBD family protein PH0883 (326 aa).

This sequence belongs to the iron-sulfur cluster assembly SufBD family.

In Pyrococcus horikoshii (strain ATCC 700860 / DSM 12428 / JCM 9974 / NBRC 100139 / OT-3), this protein is Iron-sulfur cluster assembly SufBD family protein PH0883.